We begin with the raw amino-acid sequence, 505 residues long: Amidophosphoribosyltransferase (505 aa).

Catalysis depends on Cys2, which acts as the Nucleophile. In terms of domain architecture, Glutamine amidotransferase type-2 spans 2 to 236; the sequence is CGIVGIAGVM…PGEAIYITEE (235 aa). The Mg(2+) site is built by Thr305, Asp367, and Asp368.

It in the C-terminal section; belongs to the purine/pyrimidine phosphoribosyltransferase family. Homotetramer. Requires Mg(2+) as cofactor.

The catalysed reaction is 5-phospho-beta-D-ribosylamine + L-glutamate + diphosphate = 5-phospho-alpha-D-ribose 1-diphosphate + L-glutamine + H2O. It participates in purine metabolism; IMP biosynthesis via de novo pathway; N(1)-(5-phospho-D-ribosyl)glycinamide from 5-phospho-alpha-D-ribose 1-diphosphate: step 1/2. Inhibited by iodoacetamide and by the glutamine analogs chloroketone and DON. In terms of biological role, catalyzes the formation of phosphoribosylamine from phosphoribosylpyrophosphate (PRPP) and glutamine. Can also use NH(3) in place of glutamine. The sequence is that of Amidophosphoribosyltransferase from Escherichia coli (strain K12).